Here is a 344-residue protein sequence, read N- to C-terminus: Serine proteinase inhibitor 2 (344 aa).

This sequence belongs to the serpin family. Poxviruses subfamily.

It localises to the host cytoplasm. In terms of biological role, viral serpin that inhibits both cysteine and serine proteinases involved in the regulation of host inflammatory and apoptosis processes. Major anti-apoptotic protein which inhibits both intrinsic and extrinsic pathways and strongly cleaves host CASP1 and CASP8 but is a rather poor inhibitor of host CASP3. Prevents the proteolytic activity of host interleukin-1-beta converting enzyme (ICE) and ICE-like enzymes. Can also block apoptosis through host tumor necrosis factor (TNF) receptor. The inhibition of host ICE is an example of a 'cross-class' interaction, in which a serpin inhibits a non-serine proteinase. Also inhibits granzyme B. This is Serine proteinase inhibitor 2 (OPG199) from Homo sapiens (Human).